The following is a 196-amino-acid chain: Endoribonuclease YbeY (196 aa).

The Zn(2+) site is built by H120, H124, and H130.

This sequence belongs to the endoribonuclease YbeY family. Requires Zn(2+) as cofactor.

It localises to the cytoplasm. Its function is as follows. Single strand-specific metallo-endoribonuclease involved in late-stage 70S ribosome quality control and in maturation of the 3' terminus of the 16S rRNA. The sequence is that of Endoribonuclease YbeY from Corynebacterium glutamicum (strain R).